Here is a 282-residue protein sequence, read N- to C-terminus: F-box protein VBF (282 aa).

Positions 1-44 constitute an F-box domain; the sequence is MMMLPEACIANILAFTSPADAFSSSEVSSVFRLAGDSDFVWEKF.

As to quaternary structure, component of SCF(VBF) E3 ubiquitin ligase complex that interacts with VIP1. Interacts directly with SKP1A and VIP1. Forms a complex composed of VIP1, VBF and Agrobacterium virE2.

Its function is as follows. Component of SCF(VBF) E3 ubiquitin ligase complexes, which mediate the ubiquitination and subsequent proteasomal degradation of target proteins such as VIP1 and Agrobacterium virE2, after their implication in T-DNA translocation to the host nucleus (can functionally replace Agrobacterium VirF). Required during Agrobacterium-induced tumor formation. In Arabidopsis thaliana (Mouse-ear cress), this protein is F-box protein VBF (VBF).